A 200-amino-acid chain; its full sequence is Large ribosomal subunit protein uL4 (200 aa).

The segment at 38 to 72 is disordered; that stretch reads GRQGSKQQKTRSDVSGGGKRPWRQKGTGRARAGTI.

It belongs to the universal ribosomal protein uL4 family. In terms of assembly, part of the 50S ribosomal subunit.

Its function is as follows. One of the primary rRNA binding proteins, this protein initially binds near the 5'-end of the 23S rRNA. It is important during the early stages of 50S assembly. It makes multiple contacts with different domains of the 23S rRNA in the assembled 50S subunit and ribosome. Functionally, forms part of the polypeptide exit tunnel. The protein is Large ribosomal subunit protein uL4 of Pseudomonas fluorescens (strain ATCC BAA-477 / NRRL B-23932 / Pf-5).